A 458-amino-acid polypeptide reads, in one-letter code: ATP synthase subunit beta (458 aa).

148-155 (GGAGVGKT) is an ATP binding site.

Belongs to the ATPase alpha/beta chains family. In terms of assembly, F-type ATPases have 2 components, CF(1) - the catalytic core - and CF(0) - the membrane proton channel. CF(1) has five subunits: alpha(3), beta(3), gamma(1), delta(1), epsilon(1). CF(0) has three main subunits: a(1), b(2) and c(9-12). The alpha and beta chains form an alternating ring which encloses part of the gamma chain. CF(1) is attached to CF(0) by a central stalk formed by the gamma and epsilon chains, while a peripheral stalk is formed by the delta and b chains.

Its subcellular location is the cell inner membrane. It catalyses the reaction ATP + H2O + 4 H(+)(in) = ADP + phosphate + 5 H(+)(out). In terms of biological role, produces ATP from ADP in the presence of a proton gradient across the membrane. The catalytic sites are hosted primarily by the beta subunits. This chain is ATP synthase subunit beta, found in Mannheimia succiniciproducens (strain KCTC 0769BP / MBEL55E).